Consider the following 210-residue polypeptide: Urease accessory protein UreG (210 aa).

14–21 contributes to the GTP binding site; it reads GPVGSGKT.

This sequence belongs to the SIMIBI class G3E GTPase family. UreG subfamily. Homodimer. UreD, UreF and UreG form a complex that acts as a GTP-hydrolysis-dependent molecular chaperone, activating the urease apoprotein by helping to assemble the nickel containing metallocenter of UreC. The UreE protein probably delivers the nickel.

The protein resides in the cytoplasm. Facilitates the functional incorporation of the urease nickel metallocenter. This process requires GTP hydrolysis, probably effectuated by UreG. The sequence is that of Urease accessory protein UreG from Rhodopseudomonas palustris (strain BisA53).